The primary structure comprises 308 residues: tRNA dimethylallyltransferase (308 aa).

An ATP-binding site is contributed by 8-15 (GPTGTGKS). 10 to 15 (TGTGKS) provides a ligand contact to substrate.

This sequence belongs to the IPP transferase family. As to quaternary structure, monomer. The cofactor is Mg(2+).

The catalysed reaction is adenosine(37) in tRNA + dimethylallyl diphosphate = N(6)-dimethylallyladenosine(37) in tRNA + diphosphate. Functionally, catalyzes the transfer of a dimethylallyl group onto the adenine at position 37 in tRNAs that read codons beginning with uridine, leading to the formation of N6-(dimethylallyl)adenosine (i(6)A). This Mycolicibacterium vanbaalenii (strain DSM 7251 / JCM 13017 / BCRC 16820 / KCTC 9966 / NRRL B-24157 / PYR-1) (Mycobacterium vanbaalenii) protein is tRNA dimethylallyltransferase.